A 491-amino-acid polypeptide reads, in one-letter code: AP-2 complex subunit mu (491 aa).

Residues Ser179, Ser180, and Ser181 each carry the phosphoserine modification. The MHD domain maps to 209–490 (KDEVFLYVNE…ISKAGSYEVR (282 aa)).

This sequence belongs to the adaptor complexes medium subunit family. As to quaternary structure, adaptor protein complex 2 (AP-2) is a heterotetramer composed of two large adaptins (alpha-type subunit APL3 and beta-type subunit APL1), a medium chain (mu-type subunit APM4) and a small adaptin (sigma-type subunit APS2).

Its subcellular location is the membrane. It is found in the clathrin-coated pit. The protein localises to the cytoplasmic vesicle. It localises to the clathrin-coated vesicle membrane. Component of the adaptor complexes which link clathrin to receptors in coated vesicles. Clathrin-associated protein complexes are believed to interact with the cytoplasmic tails of membrane proteins, leading to their selection and concentration. This Saccharomyces cerevisiae (strain ATCC 204508 / S288c) (Baker's yeast) protein is AP-2 complex subunit mu (APM4).